A 457-amino-acid chain; its full sequence is ATP-dependent protease ATPase subunit HslU (457 aa).

Residues I18 and 60-65 contribute to the ATP site; that span reads GVGKTE. Positions 142 to 171 are disordered; that stretch reads KQPGMGFFNPAAPEEQEEQPSADQSSTREK. ATP is bound by residues D269, E335, and R407.

Belongs to the ClpX chaperone family. HslU subfamily. As to quaternary structure, a double ring-shaped homohexamer of HslV is capped on each side by a ring-shaped HslU homohexamer. The assembly of the HslU/HslV complex is dependent on binding of ATP.

It localises to the cytoplasm. ATPase subunit of a proteasome-like degradation complex; this subunit has chaperone activity. The binding of ATP and its subsequent hydrolysis by HslU are essential for unfolding of protein substrates subsequently hydrolyzed by HslV. HslU recognizes the N-terminal part of its protein substrates and unfolds these before they are guided to HslV for hydrolysis. This chain is ATP-dependent protease ATPase subunit HslU, found in Maridesulfovibrio salexigens (strain ATCC 14822 / DSM 2638 / NCIMB 8403 / VKM B-1763) (Desulfovibrio salexigens).